The sequence spans 562 residues: Adenylate kinase isoenzyme 5 (562 aa).

Adenylate kinase stretches follow at residues 133 to 316 and 377 to 559; these read KIIL…MAVD and KIIF…TAID. Residue 142 to 147 participates in ATP binding; it reads GSGKGT. An NMP 1 region spans residues 162–193; that stretch reads SVGELLRKKIHSTSSNRKWSLIAKIITTGELA. Residues Arg-168, 191–193, 219–222, and Gln-226 contribute to the AMP site; these read ELA and GFPR. An LID 1 region spans residues 256 to 266; it reads KRAEQQGRPDD. Arg-257 provides a ligand contact to ATP. Arg-263 and Arg-274 together coordinate AMP. 386 to 391 is an ATP binding site; the sequence is GSGKGT. The interval 406–435 is NMP 2; sequence STGELLREELASESERSKLIRDIMERGDLV. AMP contacts are provided by residues Thr-407, Arg-412, 433–435, 462–465, and Gln-469; these read DLV and GYPR. Positions 499–509 are LID 2; sequence QRSRSSLPVDD. Position 500 (Arg-500) interacts with ATP. Arg-517 lines the AMP pocket. Gly-545 serves as a coordination point for ATP.

This sequence belongs to the adenylate kinase family. In terms of assembly, monomer. Interacts with YWHAZ. As to expression, brain specific.

It is found in the cytoplasm. The catalysed reaction is AMP + ATP = 2 ADP. The enzyme catalyses a 2'-deoxyribonucleoside 5'-diphosphate + ATP = a 2'-deoxyribonucleoside 5'-triphosphate + ADP. It carries out the reaction a ribonucleoside 5'-diphosphate + ATP = a ribonucleoside 5'-triphosphate + ADP. Its function is as follows. Nucleoside monophosphate (NMP) kinase that catalyzes the reversible transfer of the terminal phosphate group between nucleoside triphosphates and monophosphates. Active on AMP and dAMP with ATP as a donor. When GTP is used as phosphate donor, the enzyme phosphorylates AMP, CMP, and to a small extent dCMP. Also displays broad nucleoside diphosphate kinase activity. This chain is Adenylate kinase isoenzyme 5 (AK5), found in Homo sapiens (Human).